A 252-amino-acid polypeptide reads, in one-letter code: Ubiquinone biosynthesis protein COQ4 homolog 1, mitochondrial (252 aa).

His-130, Asp-131, His-134, and Glu-146 together coordinate Zn(2+).

This sequence belongs to the COQ4 family. In terms of assembly, component of a multi-subunit COQ enzyme complex. Zn(2+) serves as cofactor.

It localises to the mitochondrion inner membrane. The enzyme catalyses a 4-hydroxy-3-methoxy-5-(all-trans-polyprenyl)benzoate + H(+) = a 2-methoxy-6-(all-trans-polyprenyl)phenol + CO2. It participates in cofactor biosynthesis; ubiquinone biosynthesis. Lyase that catalyzes the C1-decarboxylation of 4-hydroxy-3-methoxy-5-(all-trans-polyprenyl)benzoic acid into 2-methoxy-6-(all-trans-polyprenyl)phenol during ubiquinone biosynthesis. The protein is Ubiquinone biosynthesis protein COQ4 homolog 1, mitochondrial of Trypanosoma cruzi (strain CL Brener).